The sequence spans 60 residues: Protein BNLF2a (60 aa).

Polar residues predominate over residues S14 to T26. Residues S14–E34 form a disordered region. A helical membrane pass occupies residues L41–L59.

The protein belongs to the lymphocryptovirus BNLF2a family. In terms of assembly, interacts with host TAP1 and TAP2.

Its subcellular location is the host endoplasmic reticulum membrane. Its function is as follows. Participates in viral evasion from HLA class I-restricted T-cell immunity. Associates with host TAP1 and TAP2 and prevents TAP-mediated peptide transport and subsequent loading. The sequence is that of Protein BNLF2a from Homo sapiens (Human).